The chain runs to 88 residues: Outer membrane protein H.8 (88 aa).

Residues 1 to 17 (MKKSLFAAALLSLALAA) form the signal peptide. The N-palmitoyl cysteine moiety is linked to residue Cys18. The S-diacylglycerol cysteine moiety is linked to residue Cys18. 13 consecutive repeat copies span residues 23–27 (AAEAP), 28–32 (AAEAS), 33–37 (STEAP), 38–42 (AAEAP), 43–47 (AAEAP), 48–52 (AAEAA), 53–57 (AAEAP), 58–62 (AAEAP), 63–67 (AAEAP), 68–72 (AAEAA), 73–77 (ATEAP), 78–82 (AAEAP), and 83–87 (AAEAA). A 13 X 5 AA tandem repeats of [AS]-[AT]-E-A-[PAS] region spans residues 23–87 (AAEAPAAEAS…AAEAPAAEAA (65 aa)). Residues 23 to 88 (AAEAPAAEAS…AEAPAAEAAK (66 aa)) form a disordered region. The segment covering 25–88 (EAPAAEASST…AEAPAAEAAK (64 aa)) has biased composition (low complexity).

It localises to the cell outer membrane. In Neisseria gonorrhoeae (strain ATCC 700825 / FA 1090), this protein is Outer membrane protein H.8.